The chain runs to 395 residues: Na(+)/H(+) antiporter NhaA (395 aa).

The next 11 membrane-spanning stretches (helical) occupy residues 11-31 (FAME…ALII), 61-81 (LLLW…GLEV), 96-116 (IVLP…IYWF), 127-147 (GWAI…ALLG), 156-176 (LFLM…IAIF), 179-199 (GTLS…LVAM), 202-222 (MGVV…VCVL), 264-284 (FGIL…GVTL), 295-315 (IAVG…WMAV), 331-351 (VLGV…VGSL), and 366-386 (MGIL…TAAA).

It belongs to the NhaA Na(+)/H(+) (TC 2.A.33) antiporter family.

Its subcellular location is the cell inner membrane. It catalyses the reaction Na(+)(in) + 2 H(+)(out) = Na(+)(out) + 2 H(+)(in). Na(+)/H(+) antiporter that extrudes sodium in exchange for external protons. The sequence is that of Na(+)/H(+) antiporter NhaA from Pseudomonas fluorescens (strain ATCC BAA-477 / NRRL B-23932 / Pf-5).